Reading from the N-terminus, the 323-residue chain is tRNA-modifying protein YgfZ (323 aa).

The folate site is built by W29 and W182.

It belongs to the tRNA-modifying YgfZ family.

The protein resides in the cytoplasm. Folate-binding protein involved in regulating the level of ATP-DnaA and in the modification of some tRNAs. It is probably a key factor in regulatory networks that act via tRNA modification, such as initiation of chromosomal replication. The sequence is that of tRNA-modifying protein YgfZ from Vibrio atlanticus (strain LGP32) (Vibrio splendidus (strain Mel32)).